The sequence spans 517 residues: Crotonobetaine/carnitine--CoA ligase (517 aa).

Belongs to the ATP-dependent AMP-binding enzyme family.

It catalyses the reaction 4-(trimethylamino)butanoate + ATP + CoA = 4-(trimethylamino)butanoyl-CoA + AMP + diphosphate. It carries out the reaction crotonobetaine + ATP + CoA = crotonobetainyl-CoA + AMP + diphosphate. The enzyme catalyses (R)-carnitine + ATP + CoA = (R)-carnitinyl-CoA + AMP + diphosphate. It functions in the pathway amine and polyamine metabolism; carnitine metabolism. In terms of biological role, catalyzes the transfer of CoA to carnitine, generating the initial carnitinyl-CoA needed for the CaiB reaction cycle. Also has activity toward crotonobetaine and gamma-butyrobetaine. The chain is Crotonobetaine/carnitine--CoA ligase from Escherichia coli O17:K52:H18 (strain UMN026 / ExPEC).